Here is a 189-residue protein sequence, read N- to C-terminus: MTKLLVGLGNPGDKYFETKHNVGFMLIDQLAKKQNVTFTHDKIFQADLASFFLNGEKIYLVKPTTFMNESGKAVHALLTYYGLDIDDLLIIYDDLDMEVGKIRLRAKGSAGGHNGIKSIIQHIGTQVFNRVKIGIGRPKNGMSVVHHVLSKFDRDEYIGILQSVDKVDDSVNYYLQEKNFEKTMQRYNG.

Tyrosine 15 lines the tRNA pocket. The active-site Proton acceptor is the histidine 20. Phenylalanine 66, asparagine 68, and asparagine 114 together coordinate tRNA.

This sequence belongs to the PTH family. Monomer.

Its subcellular location is the cytoplasm. It catalyses the reaction an N-acyl-L-alpha-aminoacyl-tRNA + H2O = an N-acyl-L-amino acid + a tRNA + H(+). Its function is as follows. Hydrolyzes ribosome-free peptidyl-tRNAs (with 1 or more amino acids incorporated), which drop off the ribosome during protein synthesis, or as a result of ribosome stalling. In terms of biological role, catalyzes the release of premature peptidyl moieties from peptidyl-tRNA molecules trapped in stalled 50S ribosomal subunits, and thus maintains levels of free tRNAs and 50S ribosomes. This is Peptidyl-tRNA hydrolase from Streptococcus pneumoniae (strain Taiwan19F-14).